Consider the following 352-residue polypeptide: Ion-translocating oxidoreductase complex subunit D (352 aa).

A run of 4 helical transmembrane segments spans residues 20–40 (IMLLVLLAAVPGIAAQLWFFG), 42–62 (GTLVQILLASVSALLAEALVL), 89–109 (IPPLAPWWMVVLGTVFAVIIA), and 123–143 (PAMIGYVVLLISFPVQMTSWL). Thr-187 is subject to FMN phosphoryl threonine. 5 consecutive transmembrane segments (helical) span residues 214-234 (ILAGAGWQWVNLAWLAGGVWL), 242-262 (WHIPLSFLVTLALCATLGWLF), 267-287 (LAAPQIHLLSGATMLGAFFIL), 301-321 (LIFGALAGLLVWLIRSFGGYP), and 322-342 (DGVAFAVLLANITVPLIDYYT).

The protein belongs to the NqrB/RnfD family. The complex is composed of six subunits: RsxA, RsxB, RsxC, RsxD, RsxE and RsxG. Requires FMN as cofactor.

Its subcellular location is the cell inner membrane. In terms of biological role, part of a membrane-bound complex that couples electron transfer with translocation of ions across the membrane. Required to maintain the reduced state of SoxR. In Escherichia coli O127:H6 (strain E2348/69 / EPEC), this protein is Ion-translocating oxidoreductase complex subunit D.